Consider the following 112-residue polypeptide: uncharacterized protein (112 aa).

The HIT domain maps to 5–112; that stretch reads IFQKIIKGII…LLGGKKLNKI (108 aa). The Histidine triad motif motif lies at 98-102; the sequence is HLHLH.

This is an uncharacterized protein from Buchnera aphidicola subsp. Baizongia pistaciae (strain Bp).